Reading from the N-terminus, the 47-residue chain is Large ribosomal subunit protein bL34 (47 aa).

Composition is skewed to basic residues over residues 1–22 and 36–47; these read MAKG…HGFR and ARRRKGRKSLTA. Positions 1 to 47 are disordered; that stretch reads MAKGKRTFQPNNRRRSRVHGFRSRMSTRAGRAIVSARRRKGRKSLTA.

Belongs to the bacterial ribosomal protein bL34 family.

This Corynebacterium kroppenstedtii (strain DSM 44385 / JCM 11950 / CIP 105744 / CCUG 35717) protein is Large ribosomal subunit protein bL34.